The sequence spans 553 residues: Mothers against decapentaplegic homolog 4 (553 aa).

Residues Met-1 to Tyr-323 are mediates interaction with ZBTB7A. Residues Ser-18 to Asp-142 form the MH1 domain. The residue at position 37 (Lys-37) is an N6-acetyllysine. Positions Val-44–Ser-69 are required for interaction with TSC22D1. Cys-71 lines the Zn(2+) pocket. Residue Lys-113 forms a Glycyl lysine isopeptide (Lys-Gly) (interchain with G-Cter in SUMO2) linkage. Zn(2+) contacts are provided by Cys-115, Cys-127, and His-132. The interval Gly-168–Thr-194 is disordered. Positions Pro-170–Thr-194 are enriched in polar residues. Positions Pro-275 to Pro-321 are SAD. Residues Trp-324–Asp-553 form the MH2 domain. An N6-acetyllysine mark is found at Lys-429 and Lys-508. A Glycyl lysine isopeptide (Lys-Gly) (interchain with G-Cter in ubiquitin) cross-link involves residue Lys-520.

It belongs to the dwarfin/SMAD family. Monomer; in the absence of TGF-beta activation. Heterotrimer; on TGF-beta activation. Heterotrimer composed of two molecules of a C-terminally phosphorylated R-SMAD molecule, SMAD2 or SMAD3, and one molecule of SMAD4 to form the transcriptional active SMAD2/SMAD3-SMAD4 complex. Found in a ternary complex composed of SMAD4, STK11/LKB1 and STK11IP. Found in a complex with SMAD1 and YY1. Identified in a complex that contains at least ZNF451, SMAD2, SMAD3 and SMAD4. Interacts with ATF2, COPS5, DACH1, MSG1, SKI, STK11/LKB1, STK11IP and TRIM33. Associates with ZNF423 or ZNF521 in response to BMP2 leading to activate transcription of BMP target genes. Interacts with USP9X. Interacts with RBPMS. Interacts with WWTR1 (via coiled-coil domain). Interacts with CITED1 and CITED2. Interacts with PDPK1 (via PH domain). Interacts with VPS39; this interaction affects heterodimer formation with SMAD3, but not with SMAD2, and leads to inhibition of SMAD3-dependent transcription activation. Interactions with VPS39 and SMAD2 may be mutually exclusive. Interacts (via MH2 domain) with ZNF451 (via N-terminal zinc-finger domains). Interacts with ZC3H3. Interacts weakly with ZNF8. Interacts with NUP93 and IPO7; translocates SMAD4 to the nucleus through the NPC upon BMP7 stimulation resulting in activation of SMAD4 signaling. Interacts with CREB3L1, the interaction takes place upon TGFB1 induction and SMAD4 acts as a CREB3L1 coactivator to induce the expression of genes involved in the assembly of collagen extracellular matrix. Interacts with DLX1. Interacts with ZBTB7A; the interaction is direct and stimulated by TGFB1. Interacts with CREBBP; the recruitment of this transcriptional coactivator is negatively regulated by ZBTB7A. Interacts with EP300; the interaction with this transcriptional coactivator is negatively regulated by ZBTB7A. Interacts with HDAC1. Interacts (via MH2 domain) with ZMIZ1 (via SP-RING-type domain); in the TGF-beta signaling pathway increases the activity of the SMAD3/SMAD4 transcriptional complex. Interacts (via N-terminus) with TSC22D1. Monoubiquitinated on Lys-520 by E3 ubiquitin-protein ligase TRIM33. Monoubiquitination hampers its ability to form a stable complex with activated SMAD2/3 resulting in inhibition of TGF-beta/BMP signaling cascade. Post-translationally, phosphorylated by PDPK1.

Its subcellular location is the cytoplasm. The protein localises to the nucleus. Functionally, common SMAD (co-SMAD) is the coactivator and mediator of signal transduction by TGF-beta (transforming growth factor). Component of the heterotrimeric SMAD2/SMAD3-SMAD4 complex that forms in the nucleus and is required for the TGF-mediated signaling. Promotes binding of the SMAD2/SMAD4/FAST-1 complex to DNA and provides an activation function required for SMAD1 or SMAD2 to stimulate transcription. Component of the multimeric SMAD3/SMAD4/JUN/FOS complex which forms at the AP1 promoter site; required for synergistic transcriptional activity in response to TGF-beta. Acts synergistically with SMAD1 and YY1 in bone morphogenetic protein (BMP)-mediated cardiac-specific gene expression. Binds to SMAD binding elements (SBEs) (5'-GTCT/AGAC-3') within BMP response element (BMPRE) of cardiac activating regions. May act as a tumor suppressor. Positively regulates PDPK1 kinase activity by stimulating its dissociation from the 14-3-3 protein YWHAQ which acts as a negative regulator. In muscle physiology, plays a central role in the balance between atrophy and hypertrophy. When recruited by MSTN, promotes atrophy response via phosphorylated SMAD2/4. MSTN decrease causes SMAD4 release and subsequent recruitment by the BMP pathway to promote hypertrophy via phosphorylated SMAD1/5/8. The sequence is that of Mothers against decapentaplegic homolog 4 (SMAD4) from Bos taurus (Bovine).